Consider the following 468-residue polypeptide: MTKTLPKDFIFGGATAAYQAEGATHTDGKGPVAWDKYLEDNYWYTAEPASDFYNRYPVDLKLSEEFGVNGIRISIAWSRIFPTGKGEVNPKGVEYYHNLFAECHKRHVEPFVTLHHFDTPEALHSNGDFLNRENIEHFVNYAELCFKEFSEVNYWTTFNEIGPIGDGQYLVGKFPPGIQYDLAKVFQSHHNMMVSHARAVKLFKDSGYSGEIGVVHALPTKYPFDANNPDDVRAAELEDIIHNKFILDATYLGKYSDKTMEGVNHILEVNGGELDLREEDFVALDAAKDLNDFLGINYYMSDWMQAFDGETEIIHNGKGEKGSSKYQIKGVGRRKAPVDVPKTDWDWIIFPQGLYDQIMRVKADYPNYKKIYITENGLGYKDEFVDNTVYDDGRIDYVKKHLEVISDAISDGTNVKGYFMWSLMDVFSWSNGYEKRYGLFYVDFETQERYPKKSAYWYKKVAETQVIE.

Positions 19, 116, 159, 160, and 297 each coordinate D-galactose 6-phosphate. Glu160 serves as the catalytic Proton donor. The active-site Nucleophile is the Glu375. Positions 428, 429, 435, and 437 each coordinate D-galactose 6-phosphate.

It belongs to the glycosyl hydrolase 1 family.

It carries out the reaction a 6-phospho-beta-D-galactoside + H2O = D-galactose 6-phosphate + an alcohol. It functions in the pathway carbohydrate metabolism; lactose degradation; D-galactose 6-phosphate and beta-D-glucose from lactose 6-phosphate: step 1/1. The polypeptide is 6-phospho-beta-galactosidase (Streptococcus pyogenes serotype M6 (strain ATCC BAA-946 / MGAS10394)).